The primary structure comprises 339 residues: Cathepsin B (339 aa).

Residues 1–17 (MWWSLILLSCLLALTSA) form the signal peptide. Residues 18–79 (HDKPSFHPLS…GRVAFGEDID (62 aa)) constitute a propeptide, activation peptide. Cystine bridges form between cysteine 93–cysteine 122, cysteine 105–cysteine 150, cysteine 141–cysteine 207, cysteine 142–cysteine 146, cysteine 179–cysteine 211, and cysteine 187–cysteine 198. Cysteine 108 is a catalytic residue. Asparagine 192 carries N-linked (GlcNAc...) asparagine glycosylation. N6-acetyllysine is present on lysine 220. Catalysis depends on residues histidine 278 and asparagine 298. Residues 334–339 (QYWGRF) constitute a propeptide that is removed on maturation.

It belongs to the peptidase C1 family. As to quaternary structure, dimer of a heavy chain and a light chain cross-linked by a disulfide bond. Interacts with SRPX2. Directly interacts with SHKBP1. As to expression, expressed in thyroid epithelial cells.

The protein resides in the lysosome. Its subcellular location is the melanosome. The protein localises to the secreted. It localises to the extracellular space. It is found in the apical cell membrane. The enzyme catalyses Hydrolysis of proteins with broad specificity for peptide bonds. Preferentially cleaves -Arg-Arg-|-Xaa bonds in small molecule substrates (thus differing from cathepsin L). In addition to being an endopeptidase, shows peptidyl-dipeptidase activity, liberating C-terminal dipeptides.. Thiol protease which is believed to participate in intracellular degradation and turnover of proteins. Cleaves matrix extracellular phosphoglycoprotein MEPE. Involved in the solubilization of cross-linked TG/thyroglobulin in the thyroid follicle lumen. Has also been implicated in tumor invasion and metastasis. This chain is Cathepsin B (Ctsb), found in Mus musculus (Mouse).